The primary structure comprises 410 residues: FBD-associated F-box protein At5g38590 (410 aa).

The region spanning 1–47 is the F-box domain; that stretch reads MDKINGLPDDLLVKILSYVPTDIAVSTSILSKRWEFLWMWLPNLDYT. Positions 335 to 385 constitute an FBD domain; the sequence is GWNQPSSVPECLLSSLQIFKWPQYLGRPEDRDIAVYILKNARHLKKTTILA.

The polypeptide is FBD-associated F-box protein At5g38590 (Arabidopsis thaliana (Mouse-ear cress)).